We begin with the raw amino-acid sequence, 404 residues long: Diphosphomevalonate decarboxylase mvd1 (404 aa).

Residues 25–28 (YWGK), Arg-82, 161–166 (SGSACR), and Thr-217 each bind (R)-5-diphosphomevalonate.

It belongs to the diphosphomevalonate decarboxylase family. As to quaternary structure, homodimer.

It catalyses the reaction (R)-5-diphosphomevalonate + ATP = isopentenyl diphosphate + ADP + phosphate + CO2. It participates in isoprenoid biosynthesis; isopentenyl diphosphate biosynthesis via mevalonate pathway; isopentenyl diphosphate from (R)-mevalonate: step 3/3. Diphosphomevalonate decarboxylase; part of the second module of ergosterol biosynthesis pathway that includes the middle steps of the pathway. Mvd1 converts diphosphomevalonate into isopentenyl diphosphate. The second module is carried out in the vacuole and involves the formation of farnesyl diphosphate, which is also an important intermediate in the biosynthesis of ubiquinone, dolichol, heme and prenylated proteins. Activity by the mevalonate kinase erg12 (AFUA_4G07780) first converts mevalonate into 5-phosphomevalonate. 5-phosphomevalonate is then further converted to 5-diphosphomevalonate by the phosphomevalonate kinase erg8 (AFUA_5G10680). The diphosphomevalonate decarboxylase mvd1 (AFUA_4G07130) then produces isopentenyl diphosphate. The isopentenyl-diphosphate delta-isomerase idi1 (AFUA_6G11160) then catalyzes the 1,3-allylic rearrangement of the homoallylic substrate isopentenyl (IPP) to its highly electrophilic allylic isomer, dimethylallyl diphosphate (DMAPP). Finally the farnesyl diphosphate synthase erg20 (AFUA_5G02450) catalyzes the sequential condensation of isopentenyl pyrophosphate with dimethylallyl pyrophosphate, and then with the resultant geranylpyrophosphate to the ultimate product farnesyl pyrophosphate. The protein is Diphosphomevalonate decarboxylase mvd1 of Aspergillus fumigatus (strain ATCC MYA-4609 / CBS 101355 / FGSC A1100 / Af293) (Neosartorya fumigata).